The chain runs to 412 residues: MKIYLVGGAVRDALLGLPVKDRDWVVVGSTPQEMLDAGYQQVGRDFPVFLHPQTHEEYALARTERKSGSGYTGFTCYAAPDVTLEDDLKRRDLTINALAQDDNGEIIDPYNGLGDLQNRLLRHVSPAFGEDPLRVLRVARFAARYAHLGFRIADETLTLMREMTHAGELEHLTPERVWKETENALTTRNPQVFFQVLRDCGALRVLFPEIDALFGVPAPARWHPEIDTGIHTLMTLSMAAMLSPQVDVRFTTLCHDLGKGLTPPELWPRHHGHGPAGVKLVEQLCQRLRVPNEIRDLARLVAEFHDLIHTFPMLNPKTIVKLFDSIDAWRKPQRVEQLALTSEADVRGRTGFESADYPQGRWLREAWEVAQSVPTKAVVEAGFKGVEIREELTRRRIAAVASWKEQRCPKPE.

Residues Gly-8 and Arg-11 each contribute to the ATP site. The CTP site is built by Gly-8 and Arg-11. Mg(2+)-binding residues include Asp-21 and Asp-23. ATP is bound by residues Arg-91, Arg-137, and Arg-140. Residues Arg-91, Arg-137, and Arg-140 each contribute to the CTP site. Residues Thr-228–Trp-329 enclose the HD domain.

Belongs to the tRNA nucleotidyltransferase/poly(A) polymerase family. Bacterial CCA-adding enzyme type 1 subfamily. In terms of assembly, monomer. Can also form homodimers and oligomers. Mg(2+) serves as cofactor. It depends on Ni(2+) as a cofactor.

The enzyme catalyses a tRNA precursor + 2 CTP + ATP = a tRNA with a 3' CCA end + 3 diphosphate. The catalysed reaction is a tRNA with a 3' CCA end + 2 CTP + ATP = a tRNA with a 3' CCACCA end + 3 diphosphate. Functionally, catalyzes the addition and repair of the essential 3'-terminal CCA sequence in tRNAs without using a nucleic acid template. Adds these three nucleotides in the order of C, C, and A to the tRNA nucleotide-73, using CTP and ATP as substrates and producing inorganic pyrophosphate. tRNA 3'-terminal CCA addition is required both for tRNA processing and repair. Also involved in tRNA surveillance by mediating tandem CCA addition to generate a CCACCA at the 3' terminus of unstable tRNAs. While stable tRNAs receive only 3'-terminal CCA, unstable tRNAs are marked with CCACCA and rapidly degraded. In Escherichia coli O157:H7, this protein is Multifunctional CCA protein.